A 474-amino-acid polypeptide reads, in one-letter code: Bifunctional ribulose 5-phosphate reductase/CDP-ribitol pyrophosphorylase Bcs1 (474 aa).

The ribitol-5-phosphate cytidylyltransferase stretch occupies residues 1–238 (MNKNKNIGII…DKLFQSRSHF (238 aa)). The ribulose-5-phosphate reductase stretch occupies residues 250–474 (YDMKDQVLVV…ITNILADLYK (225 aa)).

It in the N-terminal section; belongs to the IspD/TarI cytidylyltransferase family. The protein in the C-terminal section; belongs to the short-chain dehydrogenases/reductases (SDR) family. Monomer.

It carries out the reaction D-ribitol 5-phosphate + CTP + H(+) = CDP-L-ribitol + diphosphate. The enzyme catalyses D-ribitol 5-phosphate + NADP(+) = D-ribulose 5-phosphate + NADPH + H(+). It functions in the pathway capsule biogenesis; capsule polysaccharide biosynthesis. In terms of biological role, catalyzes the NADPH-dependent reduction of D-ribulose 5-phosphate to D-ribitol 5-phosphate and the further reaction of D-ribitol 5-phosphate with CTP to form CDP-ribitol. The polypeptide is Bifunctional ribulose 5-phosphate reductase/CDP-ribitol pyrophosphorylase Bcs1 (Haemophilus influenzae).